The sequence spans 205 residues: MKLVLASNNRGKLAELQAMLAPLGVQLIPQAELGVGEAEEPFHTFVENALAKARFASAHTGLPALADDAGLCVQAFGGQPGVQTAYYATQFGYDKGDANNVRALLEQMQGIDDRRAAMVSTLVAVRSPQDPEPLIAVGRVAGEIARAPRGTGGFGFDPVMVLPAFGKTFAELPPEVKNAHSHRGRSSRQMLELMREHWFAGTSER.

A substrate-binding site is contributed by 7–12 (SNNRGK). Mg(2+) contacts are provided by Glu-39 and Asp-68. The active-site Proton acceptor is the Asp-68. Substrate-binding positions include Ala-69, 154–157 (FGFD), Lys-177, and 182–183 (HR).

The protein belongs to the HAM1 NTPase family. In terms of assembly, homodimer. Requires Mg(2+) as cofactor.

The catalysed reaction is XTP + H2O = XMP + diphosphate + H(+). It carries out the reaction dITP + H2O = dIMP + diphosphate + H(+). It catalyses the reaction ITP + H2O = IMP + diphosphate + H(+). Its function is as follows. Pyrophosphatase that catalyzes the hydrolysis of nucleoside triphosphates to their monophosphate derivatives, with a high preference for the non-canonical purine nucleotides XTP (xanthosine triphosphate), dITP (deoxyinosine triphosphate) and ITP. Seems to function as a house-cleaning enzyme that removes non-canonical purine nucleotides from the nucleotide pool, thus preventing their incorporation into DNA/RNA and avoiding chromosomal lesions. The sequence is that of dITP/XTP pyrophosphatase from Acidovorax ebreus (strain TPSY) (Diaphorobacter sp. (strain TPSY)).